The chain runs to 138 residues: MAKAIPRVGSRKNGRISSRKSARRIPKGVIHVQASFHNTIVTVTDVRGRVVSWSSAGTCGFRGTRRGTPFAAQTAAANAIRTVVDQGMQRAEVMIKGPGLGRDAALRAIRRSGIVLTFVRDVTPMPHNGCRPPKKRRV.

A disordered region spans residues 1–23; that stretch reads MAKAIPRVGSRKNGRISSRKSAR. Residues 9 to 23 show a composition bias toward basic residues; that stretch reads GSRKNGRISSRKSAR.

Belongs to the universal ribosomal protein uS11 family. Part of the 30S ribosomal subunit.

The protein resides in the plastid. It localises to the chloroplast. This Coffea arabica (Arabian coffee) protein is Small ribosomal subunit protein uS11c.